Here is a 124-residue protein sequence, read N- to C-terminus: Large ribosomal subunit protein bL36m (124 aa).

This sequence belongs to the bacterial ribosomal protein bL36 family. Component of the mitochondrial large ribosomal subunit (mt-LSU). Mature N.crassa 74S mitochondrial ribosomes consist of a small (37S) and a large (54S) subunit. The 37S small subunit contains a 16S ribosomal RNA (16S mt-rRNA) and 32 different proteins. The 54S large subunit contains a 23S rRNA (23S mt-rRNA) and 42 different proteins. bL36m has a zinc binding site.

It localises to the mitochondrion. Functionally, component of the mitochondrial ribosome (mitoribosome), a dedicated translation machinery responsible for the synthesis of mitochondrial genome-encoded proteins, including at least some of the essential transmembrane subunits of the mitochondrial respiratory chain. The mitoribosomes are attached to the mitochondrial inner membrane and translation products are cotranslationally integrated into the membrane. This chain is Large ribosomal subunit protein bL36m (rtc6), found in Neurospora crassa (strain ATCC 24698 / 74-OR23-1A / CBS 708.71 / DSM 1257 / FGSC 987).